The chain runs to 461 residues: Inositol-trisphosphate 3-kinase A (461 aa).

The tract at residues 1 to 29 (MTLPGGPTGMARPGGARPCSPGLERAPRR) is disordered. The tract at residues 1-133 (MTLPGGPTGM…SVSSTGSSSL (133 aa)) is required for cytoskeleton location. R35, R55, and R62 each carry omega-N-methylarginine. The tract at residues 49–160 (AAAGEPRARG…GNVQLEAGED (112 aa)) is disordered. Positions 118 to 134 (RRLSTSSVSSTGSSSLL) are enriched in low complexity. 2 positions are modified to phosphoserine: S137 and S197. Residues S197, K209, 249 to 251 (QDL), and D262 each bind ATP. Residues K264 and R285 each coordinate substrate. The interval 287 to 295 (DMYKKMLAV) is calmodulin-binding. A substrate-binding site is contributed by 312–319 (KPRYMQWR). ATP is bound by residues K336 and D416. K419 serves as a coordination point for substrate.

Belongs to the inositol phosphokinase (IPK) family. In terms of tissue distribution, expressed in brain.

The protein localises to the cytoplasm. The protein resides in the cytoskeleton. It catalyses the reaction 1D-myo-inositol 1,4,5-trisphosphate + ATP = 1D-myo-inositol 1,3,4,5-tetrakisphosphate + ADP + H(+). Activated by calcium/calmodulin. Catalyzes the phosphorylation of 1D-myo-inositol 1,4,5-trisphosphate (InsP3) into 1D-myo-inositol 1,3,4,5-tetrakisphosphate and participates to the regulation of calcium homeostasis. This is Inositol-trisphosphate 3-kinase A from Homo sapiens (Human).